The primary structure comprises 529 residues: MFLFAMGLLLVILQPSTGQFPRVCANTQSLLRKECCPPWDGDGTPCGERSNRGTCQRILLSQAPLGPQFPFSGVDDREDWPSVFYNRTCRCRGNFMGFNCGECKFGFSGQNCTERRLRTRRNIFQLTISEKDKFLAYLNLAKNIPSKDYVIATGTYAQMNNGSNPMFRNINVYDLFVWMHYYASRDTLLGGSNVWRDIDFAHEAPGFLPWHRAFLLLWEREIQKITGDENFTIPYWDWRDAEDCVICTDEYMGGQHPTNPNLLSPASFFSSWQVICTQSEEYNSQQALCNATSEGPILRNPGNNDKSRTPRLPSSSEVEFCLTLTQYESGSMDKMANYSFRNTLEGFADPHTAISNISQSGLHNALHIYMNGSMSQVQGSANDPIFILHHAFVDSIFERWLRRHRPMLEVYPAANAPIGHNRENYMVPFIPLYRNGEFFISSRELGYDYEYLQEPALGSFQDFLIPYLKQAHQIWPWLVGAAVIGGIITAVLSGLILACRKKRKGTSPEIQPLLTESEDYNNVSYQSHF.

The signal sequence occupies residues 1–18; sequence MFLFAMGLLLVILQPSTG. At 19–476 the chain is on the lumenal, melanosome side; it reads QFPRVCANTQ…YLKQAHQIWP (458 aa). 3 N-linked (GlcNAc...) asparagine glycosylation sites follow: Asn86, Asn111, and Asn161. Cu cation contacts are provided by His180, His202, and His211. Residues Asn230 and Asn290 are each glycosylated (N-linked (GlcNAc...) asparagine). The disordered stretch occupies residues 293 to 313; it reads SEGPILRNPGNNDKSRTPRLP. Residues Asn337 and Asn356 are each glycosylated (N-linked (GlcNAc...) asparagine). The Cu cation site is built by His363 and His367. Asn371 carries N-linked (GlcNAc...) asparagine glycosylation. His390 lines the Cu cation pocket. Residues 477–497 traverse the membrane as a helical segment; the sequence is WLVGAAVIGGIITAVLSGLIL. Topologically, residues 498–529 are cytoplasmic; sequence ACRKKRKGTSPEIQPLLTESEDYNNVSYQSHF.

It belongs to the tyrosinase family. Requires Cu(2+) as cofactor.

It is found in the melanosome membrane. The protein resides in the melanosome. The catalysed reaction is 2 L-dopa + O2 = 2 L-dopaquinone + 2 H2O. It catalyses the reaction L-tyrosine + O2 = L-dopaquinone + H2O. Its function is as follows. This is a copper-containing oxidase that functions in the formation of pigments such as melanins and other polyphenolic compounds. Catalyzes the initial and rate limiting step in the cascade of reactions leading to melanin production from tyrosine. In addition to hydroxylating tyrosine to DOPA (3,4-dihydroxyphenylalanine), also catalyzes the oxidation of DOPA to DOPA-quinone, and possibly the oxidation of DHI (5,6-dihydroxyindole) to indole-5,6 quinone. This is Tyrosinase (TYR) from Gallus gallus (Chicken).